The primary structure comprises 134 residues: Large ribosomal subunit protein uL16c (134 aa).

The protein belongs to the universal ribosomal protein uL16 family. In terms of assembly, part of the 50S ribosomal subunit.

Its subcellular location is the plastid. It is found in the chloroplast. The protein is Large ribosomal subunit protein uL16c of Atropa belladonna (Belladonna).